A 591-amino-acid polypeptide reads, in one-letter code: MSLSPLNYADWEIAQAAEKHMKTVYDLGKDLGLDHKEIFPYGHYMGKVDYKSVLSRLEQSSDGKYIDVTAITPTPLGEGKSTTTIGLVQGLAKRGKRSSAAIRQPSGGPTMGVKGSAAGGGLSQCIPLTQYSLGFTGDINAVMNAHNLSMVALTSRMQHERNYSDEKLYALSNMKRLDIDPTNIPMGWVMDFCCQSLRNIIIGIDGVSGKSDGYMMRSHFDIAVSSEVMAILAIAKDLKDFRQRISKIIVAYDKQGKAITTADLEVDGAMTAWMVEAINPNLIQSIEGQPIFVHAGPFANIAIGQSSVIADRLGLKLSEYHVTESGFGVDIGYEKFWNLKCHYSGLTPDAAVIVTTVRALKSHGGAPIPIPGRPLPKEYTEENVGYVEVGSANLIHHINTVKKSGVPPVVCINAFTTDTPSEIAKIRQLCELVGARVAVSKHWEYGGDGALELADAVIDACNEEKNFLPLYDWSLPLKERIEKIAFEVYGAEGVEFSEEAIYKLNKLQADNNSSDLGVCMVKTHLSLSDDPKQKGVPDHWKLHVRDIMFFGGAGFVVPIAGSITLMPGTGSNPSFRRIDVDTDTGKVKGIF.

ATP is bound at residue 74–81 (TPLGEGKS).

It belongs to the formate--tetrahydrofolate ligase family.

The catalysed reaction is (6S)-5,6,7,8-tetrahydrofolate + formate + ATP = (6R)-10-formyltetrahydrofolate + ADP + phosphate. It functions in the pathway one-carbon metabolism; tetrahydrofolate interconversion. This Lawsonia intracellularis (strain PHE/MN1-00) protein is Formate--tetrahydrofolate ligase.